Here is a 108-residue protein sequence, read N- to C-terminus: Peptidyl-prolyl cis-trans isomerase FKBP1B (108 aa).

The PPIase FKBP-type domain maps to 20 to 108; sequence GQTCVVHYTG…IFDVELLNLE (89 aa).

Identified in a complex composed of RYR2, FKBP1B, PKA catalytic subunit, PRKAR2A, AKAP6, and the protein phosphatases PP2A and PP1. Interacts directly with RYR2.

It localises to the cytoplasm. Its subcellular location is the sarcoplasmic reticulum. It catalyses the reaction [protein]-peptidylproline (omega=180) = [protein]-peptidylproline (omega=0). Inhibited by both FK506 and rapamycin. In terms of biological role, has the potential to contribute to the immunosuppressive and toxic effects of FK506 and rapamycin. PPIases accelerate the folding of proteins. It catalyzes the cis-trans isomerization of proline imidic peptide bonds in oligopeptides. The chain is Peptidyl-prolyl cis-trans isomerase FKBP1B (FKBP1B) from Bos taurus (Bovine).